We begin with the raw amino-acid sequence, 338 residues long: Large ribosomal subunit protein uL10 (338 aa).

Residues 303–338 (VEVSAAPAAEEEKEEEKKEEEKKEEDTGAAGLALLF) are disordered. The segment covering 317-328 (EEKKEEEKKEED) has biased composition (basic and acidic residues).

Belongs to the universal ribosomal protein uL10 family. As to quaternary structure, part of the 50S ribosomal subunit. Forms part of the ribosomal stalk which helps the ribosome interact with GTP-bound translation factors. Forms a heptameric L10(L12)2(L12)2(L12)2 complex, where L10 forms an elongated spine to which the L12 dimers bind in a sequential fashion.

Functionally, forms part of the ribosomal stalk, playing a central role in the interaction of the ribosome with GTP-bound translation factors. This chain is Large ribosomal subunit protein uL10, found in Methanocaldococcus jannaschii (strain ATCC 43067 / DSM 2661 / JAL-1 / JCM 10045 / NBRC 100440) (Methanococcus jannaschii).